A 237-amino-acid polypeptide reads, in one-letter code: Ribosomal RNA small subunit methyltransferase G (237 aa).

S-adenosyl-L-methionine is bound by residues G78, F83, 129–130, and R148; that span reads AE.

It belongs to the methyltransferase superfamily. RNA methyltransferase RsmG family.

The protein localises to the cytoplasm. Specifically methylates the N7 position of a guanine in 16S rRNA. The polypeptide is Ribosomal RNA small subunit methyltransferase G (Streptococcus equi subsp. zooepidemicus (strain MGCS10565)).